The primary structure comprises 554 residues: Protein translocase subunit SecD (554 aa).

6 consecutive transmembrane segments (helical) span residues 10–30 (LVIL…MFYA), 392–412 (AGMV…IASY), 414–434 (LFGF…FAVM), 435–455 (GAIG…TIGT), 491–511 (AIID…VLGA), and 516–536 (GFAV…IWVV).

Belongs to the SecD/SecF family. SecD subfamily. As to quaternary structure, forms a complex with SecF. Part of the essential Sec protein translocation apparatus which comprises SecA, SecYEG and auxiliary proteins SecDF-YajC and YidC.

It localises to the cell inner membrane. Functionally, part of the Sec protein translocase complex. Interacts with the SecYEG preprotein conducting channel. SecDF uses the proton motive force (PMF) to complete protein translocation after the ATP-dependent function of SecA. The protein is Protein translocase subunit SecD of Rhodobacter capsulatus (strain ATCC BAA-309 / NBRC 16581 / SB1003).